A 449-amino-acid chain; its full sequence is GTPase Der (449 aa).

EngA-type G domains lie at 4-174 and 183-358; these read PIVA…PPKT and LRIA…VQRQ. GTP-binding positions include 10-17, 57-61, 126-129, 189-196, 236-240, and 301-304; these read GRPNVGKS, DTAGV, NKCD, DTAGI, and NKWD. The 86-residue stretch at 359 to 444 folds into the KH-like domain; the sequence is KRVPTSELNN…PIVIVFRSRE (86 aa).

This sequence belongs to the TRAFAC class TrmE-Era-EngA-EngB-Septin-like GTPase superfamily. EngA (Der) GTPase family. In terms of assembly, associates with the 50S ribosomal subunit.

GTPase that plays an essential role in the late steps of ribosome biogenesis. In Chloroflexus aurantiacus (strain ATCC 29366 / DSM 635 / J-10-fl), this protein is GTPase Der.